The primary structure comprises 320 residues: Small ribosomal subunit protein uS15m (320 aa).

Disordered regions lie at residues 37–60 and 214–242; these read NISQKEKKRKMKQDPYGWAQAQQR and QSLERPTPPLARGVEPKPQPVRAGPDTGS.

This sequence belongs to the universal ribosomal protein uS15 family. Component of the mitochondrial small ribosomal subunit (mt-SSU). Mature N.crassa 74S mitochondrial ribosomes consist of a small (37S) and a large (54S) subunit. The 37S small subunit contains a 16S ribosomal RNA (16S mt-rRNA) and 32 different proteins. The 54S large subunit contains a 23S rRNA (23S mt-rRNA) and 42 different proteins.

It is found in the mitochondrion. Its function is as follows. Component of the mitochondrial ribosome (mitoribosome), a dedicated translation machinery responsible for the synthesis of mitochondrial genome-encoded proteins, including at least some of the essential transmembrane subunits of the mitochondrial respiratory chain. The mitoribosomes are attached to the mitochondrial inner membrane and translation products are cotranslationally integrated into the membrane. This is Small ribosomal subunit protein uS15m (mrps28) from Neurospora crassa (strain ATCC 24698 / 74-OR23-1A / CBS 708.71 / DSM 1257 / FGSC 987).